Consider the following 538-residue polypeptide: Ubiquitin domain-containing protein DSK2a (538 aa).

Residues V18–S93 form the Ubiquitin-like domain. Positions P95–L120 are disordered. Polar residues predominate over residues A102 to N119. 2 STI1 domains span residues G138–M179 and N192–M231. Positions Q289–P316 are disordered. STI1 domains follow at residues S357 to L394 and N398 to M433. The region spanning P491–S535 is the UBA domain.

Interacts with 'Lys-48'-linked polyubiquitin chains via its UBA domain. Interacts with RPN10 and RPN13. Interacts with PEX2 and PEX12. Ubiquitous with a strong expression level in inflorescence.

The protein localises to the nucleus. Its subcellular location is the cytoplasm. Its function is as follows. Binds and presumably selects ubiquitin-conjugates for destruction. Prefers multiubiquitin chains rather than single ubiquitins, with a binding affinity for 'Lys-48'-linked ubiquitin chains. Acts as a ubiquitin receptor that associates with the 26S proteasomal docking subunit RPN10 for the indirect recognition of ubiquitinated substrates of ubiquitin/26S proteasome-mediated proteolysis (UPP). This is Ubiquitin domain-containing protein DSK2a (DSK2A) from Arabidopsis thaliana (Mouse-ear cress).